A 720-amino-acid chain; its full sequence is Polyribonucleotide nucleotidyltransferase (720 aa).

Positions 487 and 493 each coordinate Mg(2+). Residues 554-613 (PRITTISIPKEKIREVIGTGGKVIREICEQTGAKIDIDDDGTIKVASVDADAAQRAIDWI) enclose the KH domain. The 69-residue stretch at 623–691 (GVIYNGKVVK…DRGKVKLSMK (69 aa)) folds into the S1 motif domain. The interval 695–720 (QTTGEDISAQLEAERAASKRERHHED) is disordered. The segment covering 706-720 (EAERAASKRERHHED) has biased composition (basic and acidic residues).

Belongs to the polyribonucleotide nucleotidyltransferase family. Mg(2+) is required as a cofactor.

It localises to the cytoplasm. It catalyses the reaction RNA(n+1) + phosphate = RNA(n) + a ribonucleoside 5'-diphosphate. Functionally, involved in mRNA degradation. Catalyzes the phosphorolysis of single-stranded polyribonucleotides processively in the 3'- to 5'-direction. The sequence is that of Polyribonucleotide nucleotidyltransferase from Paramagnetospirillum magneticum (strain ATCC 700264 / AMB-1) (Magnetospirillum magneticum).